The following is a 163-amino-acid chain: Probable ribosome biogenesis protein RLP24 (163 aa).

Belongs to the eukaryotic ribosomal protein eL24 family. Associated with nucleolar and cytoplasmic pre-60S particles. At the end of biogenesis it dissociates from cytoplasmic pre-60S particles and is likely to be exchanged for its ribosomal homolog, RPL24.

It localises to the nucleus. Its subcellular location is the nucleolus. In terms of biological role, involved in the biogenesis of the 60S ribosomal subunit. Ensures the docking of GTPBP4/NOG1 to pre-60S particles. The chain is Probable ribosome biogenesis protein RLP24 (Rsl24d1) from Mus musculus (Mouse).